A 487-amino-acid chain; its full sequence is Acetyl-coenzyme A carboxylase carboxyl transferase subunit beta, chloroplastic (487 aa).

Positions 180–201 (SRNSSENEGSSKRTRTKGSDLT) are disordered. The CoA carboxyltransferase N-terminal domain maps to 218–487 (LWVQCENCYG…PLNQKSSKIK (270 aa)). Residues cysteine 222, cysteine 225, cysteine 241, and cysteine 244 each contribute to the Zn(2+) site. The C4-type zinc-finger motif lies at 222 to 244 (CENCYGLNYKKFLKSKMNICEQC).

The protein belongs to the AccD/PCCB family. In terms of assembly, acetyl-CoA carboxylase is a heterohexamer composed of biotin carboxyl carrier protein, biotin carboxylase and 2 subunits each of ACCase subunit alpha and ACCase plastid-coded subunit beta (accD). The cofactor is Zn(2+).

It localises to the plastid. Its subcellular location is the chloroplast stroma. It catalyses the reaction N(6)-carboxybiotinyl-L-lysyl-[protein] + acetyl-CoA = N(6)-biotinyl-L-lysyl-[protein] + malonyl-CoA. The protein operates within lipid metabolism; malonyl-CoA biosynthesis; malonyl-CoA from acetyl-CoA: step 1/1. Functionally, component of the acetyl coenzyme A carboxylase (ACC) complex. Biotin carboxylase (BC) catalyzes the carboxylation of biotin on its carrier protein (BCCP) and then the CO(2) group is transferred by the transcarboxylase to acetyl-CoA to form malonyl-CoA. In Atropa belladonna (Belladonna), this protein is Acetyl-coenzyme A carboxylase carboxyl transferase subunit beta, chloroplastic.